A 354-amino-acid polypeptide reads, in one-letter code: Ribosomal RNA large subunit methyltransferase M (354 aa).

S-adenosyl-L-methionine-binding positions include Ser-183, 216 to 219, Asp-235, Asp-255, and Asp-271; that span reads SPGG. Residue Lys-300 is the Proton acceptor of the active site.

It belongs to the class I-like SAM-binding methyltransferase superfamily. RNA methyltransferase RlmE family. RlmM subfamily. As to quaternary structure, monomer.

Its subcellular location is the cytoplasm. It catalyses the reaction cytidine(2498) in 23S rRNA + S-adenosyl-L-methionine = 2'-O-methylcytidine(2498) in 23S rRNA + S-adenosyl-L-homocysteine + H(+). Its function is as follows. Catalyzes the 2'-O-methylation at nucleotide C2498 in 23S rRNA. The protein is Ribosomal RNA large subunit methyltransferase M of Pseudomonas putida (strain GB-1).